Here is a 95-residue protein sequence, read N- to C-terminus: UPF0235 protein Adeh_1087 (95 aa).

It belongs to the UPF0235 family.

The sequence is that of UPF0235 protein Adeh_1087 from Anaeromyxobacter dehalogenans (strain 2CP-C).